The following is a 529-amino-acid chain: Autoinducer-2 kinase (529 aa).

The protein belongs to the FGGY kinase family.

Its subcellular location is the cytoplasm. It carries out the reaction (S)-4,5-dihydroxypentane-2,3-dione + ATP = (2S)-2-hydroxy-3,4-dioxopentyl phosphate + ADP + H(+). Catalyzes the phosphorylation of autoinducer-2 (AI-2) to phospho-AI-2, which subsequently inactivates the transcriptional regulator LsrR and leads to the transcription of the lsr operon. Phosphorylates the ring-open form of (S)-4,5-dihydroxypentane-2,3-dione (DPD), which is the precursor to all AI-2 signaling molecules, at the C5 position. The protein is Autoinducer-2 kinase of Yersinia enterocolitica serotype O:8 / biotype 1B (strain NCTC 13174 / 8081).